The sequence spans 217 residues: 3-isopropylmalate dehydratase small subunit (217 aa).

Belongs to the LeuD family. LeuD type 1 subfamily. Heterodimer of LeuC and LeuD.

The enzyme catalyses (2R,3S)-3-isopropylmalate = (2S)-2-isopropylmalate. It participates in amino-acid biosynthesis; L-leucine biosynthesis; L-leucine from 3-methyl-2-oxobutanoate: step 2/4. In terms of biological role, catalyzes the isomerization between 2-isopropylmalate and 3-isopropylmalate, via the formation of 2-isopropylmaleate. This Paraburkholderia phymatum (strain DSM 17167 / CIP 108236 / LMG 21445 / STM815) (Burkholderia phymatum) protein is 3-isopropylmalate dehydratase small subunit.